The sequence spans 157 residues: Ubiquitin-like protein 4A (157 aa).

The Ubiquitin-like domain occupies 1–76 (MQLTVKALQG…LNLVVKPLEK (76 aa)). Lys-48 is covalently cross-linked (Glycyl lysine isopeptide (Lys-Gly) (interchain with G-Cter in ubiquitin)). Ser-90 is modified (phosphoserine). A required and sufficient for interaction with BAG6 region spans residues 96-138 (WQLISKVLARHFSAADASRVLEQLQRDYQRSLSRLTLDDIERL).

As to quaternary structure, component of the BAG6/BAT3 complex, at least composed of BAG6, UBL4A and GET4/TRC35. Interacts with BAG6; the interaction is direct and required for UBL4A protein stability. Interacts with USP13; may be indirect via BAG6. Post-translationally, polyubiquitinated. Ubiquitination by AMFR and deubiquitination by USP13 may regulate the interaction between the BAG6/BAT complex and SGTA and therefore may regulate client proteins fate.

It is found in the cytoplasm. Its subcellular location is the cytosol. The protein localises to the nucleus. Its function is as follows. As part of a cytosolic protein quality control complex, the BAG6/BAT3 complex, maintains misfolded and hydrophobic patches-containing proteins in a soluble state and participates in their proper delivery to the endoplasmic reticulum or alternatively can promote their sorting to the proteasome where they undergo degradation. The BAG6/BAT3 complex is involved in the post-translational delivery of tail-anchored/type II transmembrane proteins to the endoplasmic reticulum membrane. Recruited to ribosomes, it interacts with the transmembrane region of newly synthesized tail-anchored proteins and together with SGTA and ASNA1 mediates their delivery to the endoplasmic reticulum. Client proteins that cannot be properly delivered to the endoplasmic reticulum are ubiquitinated and sorted to the proteasome. Similarly, the BAG6/BAT3 complex also functions as a sorting platform for proteins of the secretory pathway that are mislocalized to the cytosol either delivering them to the proteasome for degradation or to the endoplasmic reticulum. The BAG6/BAT3 complex also plays a role in the endoplasmic reticulum-associated degradation (ERAD), a quality control mechanism that eliminates unwanted proteins of the endoplasmic reticulum through their retrotranslocation to the cytosol and their targeting to the proteasome. It maintains these retrotranslocated proteins in an unfolded yet soluble state condition in the cytosol to ensure their proper delivery to the proteasome. The polypeptide is Ubiquitin-like protein 4A (UBL4A) (Plecturocebus moloch (Dusky titi monkey)).